The chain runs to 144 residues: Large ribosomal subunit protein uL16 (144 aa).

The protein belongs to the universal ribosomal protein uL16 family. Part of the 50S ribosomal subunit.

Functionally, binds 23S rRNA and is also seen to make contacts with the A and possibly P site tRNAs. The sequence is that of Large ribosomal subunit protein uL16 from Clostridium perfringens (strain ATCC 13124 / DSM 756 / JCM 1290 / NCIMB 6125 / NCTC 8237 / Type A).